Here is a 100-residue protein sequence, read N- to C-terminus: Large ribosomal subunit protein bL21 (100 aa).

Belongs to the bacterial ribosomal protein bL21 family. In terms of assembly, part of the 50S ribosomal subunit. Contacts protein L20.

In terms of biological role, this protein binds to 23S rRNA in the presence of protein L20. This is Large ribosomal subunit protein bL21 from Mycoplasma pneumoniae (strain ATCC 29342 / M129 / Subtype 1) (Mycoplasmoides pneumoniae).